The primary structure comprises 125 residues: Mesotocin-neurophysin MT (125 aa).

Positions 1 to 19 (MSYTALAVTFFGWLALSSA) are cleaved as a signal peptide. The cysteines at positions 20 and 25 are disulfide-linked. Residue Gly28 is modified to Glycine amide. Disulfide bonds link Cys42-Cys86, Cys45-Cys59, Cys53-Cys76, Cys60-Cys66, Cys93-Cys106, Cys100-Cys118, and Cys107-Cys112.

This sequence belongs to the vasopressin/oxytocin family. In terms of tissue distribution, mesotocin is produced by magnocellular preoptic neurons in the hypothalamus in amphibians, reptiles and birds.

The protein localises to the secreted. Its function is as follows. Mesotocin is a diuretic hormone. This Bufo japonicus (Japanese common toad) protein is Mesotocin-neurophysin MT.